Consider the following 81-residue polypeptide: Costars family protein ABRACL (81 aa).

It belongs to the costars family.

The sequence is that of Costars family protein ABRACL from Salmo salar (Atlantic salmon).